A 482-amino-acid polypeptide reads, in one-letter code: MDLFRVWSGMDFLAWRGMAYTLLLLNFVFACQLLLLQPLVSALDGQSVDAAELFERASQSIKVKRYSDALDDLNAAIEADPALSEAYFKRASVLRHFCRYEDSENSYQKYLEFKSGDSNAEKELSQLHQAKSALETASTLYESKDIAKALEFVDKVVLVFSPACSKAKLLKVKLLMVSKDYSGAISETGYILKEDENNLEALLLRGRAYYYLADHDIAQRHYQKGLRLDPEHSELKKAYFGLKKLLKKTKSAEDNANKGKLRVSAEEYKEAIALDPEHTANNVHLYLGLCKVSVRLGRGKDGLNSCNEALNIDAELIEALHQRGEAKLLLEDWEGAVEDLKQAAQNSQDMEIHESLGKAEKALKMSKRKDWYKILGISRTASISEIKKAYKKLALQWHPDKNVGNREEAENKFREIAAAYEILGDDDKRARFDRGEDLEDMGGGGGGGYNPFHGGGGGGQQYTFHFEGGFPGGGGGFGGFGF.

An N-terminal signal peptide occupies residues 1–42 (MDLFRVWSGMDFLAWRGMAYTLLLLNFVFACQLLLLQPLVSA). TPR repeat units lie at residues 50–83 (AAEL…DPAL), 85–117 (EAYF…KSGD), 130–164 (AKSA…SPAC), 166–198 (KAKL…DENN), 199–232 (LEAL…DPEH), 245–278 (LLKK…DPEH), 283–316 (VHLY…DAEL), and 318–350 (EALH…SQDM). The J domain occupies 370-436 (DWYKILGISR…DKRARFDRGE (67 aa)).

Interacts with the helicase domain of the tobamovirus (TMV) and the tobacco etch virus (TEV) replicases. As to expression, expressed in flower buds and flowers.

Its subcellular location is the endoplasmic reticulum lumen. Its function is as follows. Plays an important positive role in viral symptom development and is required for viral multiplication and pathogenesis. This is DnaJ protein P58IPK homolog (P58IPK) from Arabidopsis thaliana (Mouse-ear cress).